A 1137-amino-acid chain; its full sequence is Phytochrome C (1137 aa).

Positions 1-18 are enriched in low complexity; sequence MSSSRSNNRATCSRSSSA. The interval 1-27 is disordered; the sequence is MSSSRSNNRATCSRSSSARSKHSARVV. The region spanning 217–400 is the GAF domain; sequence NLSLLCDVLV…VFGIQINKEV (184 aa). Cysteine 322 serves as a coordination point for phytochromobilin. 2 consecutive PAS domains span residues 620–690 and 750–824; these read VTNE…LQGI and IQGD…TKLS. The Histidine kinase domain maps to 904–1124; that stretch reads YIRQELRNPL…IVLVEFPVAQ (221 aa).

This sequence belongs to the phytochrome family. As to quaternary structure, homodimer. Post-translationally, contains one covalently linked phytochromobilin chromophore.

Its function is as follows. Regulatory photoreceptor which exists in two forms that are reversibly interconvertible by light: the Pr form that absorbs maximally in the red region of the spectrum and the Pfr form that absorbs maximally in the far-red region. Photoconversion of Pr to Pfr induces an array of morphogenic responses, whereas reconversion of Pfr to Pr cancels the induction of those responses. Pfr controls the expression of a number of nuclear genes including those encoding the small subunit of ribulose-bisphosphate carboxylase, chlorophyll A/B binding protein, protochlorophyllide reductase, rRNA, etc. It also controls the expression of its own gene(s) in a negative feedback fashion. The sequence is that of Phytochrome C (PHYC) from Oryza sativa subsp. japonica (Rice).